Reading from the N-terminus, the 246-residue chain is Orotidine 5'-phosphate decarboxylase (246 aa).

Residues aspartate 22, lysine 44, 71-80, threonine 130, arginine 191, glutamine 201, glycine 221, and arginine 222 each bind substrate; that span reads DLKYHDIPHT. Residue lysine 73 is the Proton donor of the active site.

Belongs to the OMP decarboxylase family. Type 1 subfamily. Homodimer.

It carries out the reaction orotidine 5'-phosphate + H(+) = UMP + CO2. The protein operates within pyrimidine metabolism; UMP biosynthesis via de novo pathway; UMP from orotate: step 2/2. Its function is as follows. Catalyzes the decarboxylation of orotidine 5'-monophosphate (OMP) to uridine 5'-monophosphate (UMP). In Neisseria meningitidis serogroup C (strain 053442), this protein is Orotidine 5'-phosphate decarboxylase.